A 427-amino-acid chain; its full sequence is Glutamate-1-semialdehyde 2,1-aminomutase (427 aa).

The residue at position 265 (K265) is an N6-(pyridoxal phosphate)lysine.

Belongs to the class-III pyridoxal-phosphate-dependent aminotransferase family. HemL subfamily. In terms of assembly, homodimer. Pyridoxal 5'-phosphate is required as a cofactor.

It localises to the cytoplasm. The enzyme catalyses (S)-4-amino-5-oxopentanoate = 5-aminolevulinate. It participates in porphyrin-containing compound metabolism; protoporphyrin-IX biosynthesis; 5-aminolevulinate from L-glutamyl-tRNA(Glu): step 2/2. The protein is Glutamate-1-semialdehyde 2,1-aminomutase of Mannheimia succiniciproducens (strain KCTC 0769BP / MBEL55E).